Here is a 495-residue protein sequence, read N- to C-terminus: Cytochrome P450 2E1 (495 aa).

Phenylalanine 298–threonine 303 serves as a coordination point for substrate. Cysteine 437 contributes to the heme binding site.

The protein belongs to the cytochrome P450 family. Interacts with chaperones HSP70 and HSP90; this interaction is required for initial targeting to mitochondria. Heme serves as cofactor.

It localises to the endoplasmic reticulum membrane. Its subcellular location is the microsome membrane. The protein localises to the mitochondrion inner membrane. It carries out the reaction an organic molecule + reduced [NADPH--hemoprotein reductase] + O2 = an alcohol + oxidized [NADPH--hemoprotein reductase] + H2O + H(+). It catalyses the reaction (5Z,8Z,11Z)-eicosatrienoate + reduced [NADPH--hemoprotein reductase] + O2 = 19-hydroxy-(5Z,8Z,11Z)-eicosatrienoate + oxidized [NADPH--hemoprotein reductase] + H2O + H(+). The catalysed reaction is (5Z,8Z,11Z,14Z,17Z)-eicosapentaenoate + reduced [NADPH--hemoprotein reductase] + O2 = 19-hydroxy-(5Z,8Z,11Z,14Z,17Z)-eicosapentaenoate + oxidized [NADPH--hemoprotein reductase] + H2O + H(+). The enzyme catalyses (4Z,7Z,10Z,13Z,16Z,19Z)-docosahexaenoate + reduced [NADPH--hemoprotein reductase] + O2 = 21-hydroxy-(4Z,7Z,10Z,13Z,16Z,19Z)-docosahexaenoate + oxidized [NADPH--hemoprotein reductase] + H2O + H(+). It carries out the reaction dodecanoate + reduced [NADPH--hemoprotein reductase] + O2 = 11-hydroxydodecanoate + oxidized [NADPH--hemoprotein reductase] + H2O + H(+). It catalyses the reaction tetradecanoate + reduced [NADPH--hemoprotein reductase] + O2 = 13-hydroxytetradecanoate + oxidized [NADPH--hemoprotein reductase] + H2O + H(+). The catalysed reaction is 4-nitrophenol + NADPH + O2 + H(+) = 4-nitrocatechol + NADP(+) + H2O. The protein operates within lipid metabolism; fatty acid metabolism. With respect to regulation, the omega-1 hydroxylase activity is stimulated by cytochrome b5. A cytochrome P450 monooxygenase involved in the metabolism of fatty acids. Mechanistically, uses molecular oxygen inserting one oxygen atom into a substrate, and reducing the second into a water molecule, with two electrons provided by NADPH via cytochrome P450 reductase (NADPH--hemoprotein reductase). Catalyzes the hydroxylation of carbon-hydrogen bonds. Hydroxylates fatty acids specifically at the omega-1 position displaying the highest catalytic activity for saturated fatty acids. May be involved in the oxidative metabolism of xenobiotics. This is Cytochrome P450 2E1 (CYP2E1) from Bos taurus (Bovine).